Reading from the N-terminus, the 482-residue chain is Adenylosuccinate lyase (482 aa).

Residues 14–15, 82–84, and 108–109 each bind substrate; these read RY, RHD, and TS. Residue His156 is the Proton donor/acceptor of the active site. A Glycyl lysine isopeptide (Lys-Gly) (interchain with G-Cter in ubiquitin) cross-link involves residue Lys196. Gln238 contacts substrate. The active-site Proton donor/acceptor is the Ser286. Substrate contacts are provided by Arg300, Arg326, Ser331, and Arg335.

This sequence belongs to the lyase 1 family. Adenylosuccinate lyase subfamily. As to quaternary structure, homotetramer. Residues from neighboring subunits contribute catalytic and substrate-binding residues to each active site.

The enzyme catalyses N(6)-(1,2-dicarboxyethyl)-AMP = fumarate + AMP. It carries out the reaction (2S)-2-[5-amino-1-(5-phospho-beta-D-ribosyl)imidazole-4-carboxamido]succinate = 5-amino-1-(5-phospho-beta-D-ribosyl)imidazole-4-carboxamide + fumarate. It functions in the pathway purine metabolism; AMP biosynthesis via de novo pathway; AMP from IMP: step 2/2. The protein operates within purine metabolism; IMP biosynthesis via de novo pathway; 5-amino-1-(5-phospho-D-ribosyl)imidazole-4-carboxamide from 5-amino-1-(5-phospho-D-ribosyl)imidazole-4-carboxylate: step 2/2. This is Adenylosuccinate lyase (ADE13) from Saccharomyces cerevisiae (strain ATCC 204508 / S288c) (Baker's yeast).